The sequence spans 69 residues: Beta-defensin 1 (69 aa).

An N-terminal signal peptide occupies residues 1 to 21 (MKTHYFLLVMLFFLFSQMELG). Positions 22–32 (AGILTSLGRRT) are excised as a propeptide. 3 cysteine pairs are disulfide-bonded: Cys37–Cys66, Cys44–Cys59, and Cys49–Cys67.

It belongs to the beta-defensin family. As to quaternary structure, monomer. Homodimer. As to expression, highly expressed in kidney.

The protein resides in the secreted. It localises to the membrane. In terms of biological role, has bactericidal activity. May act as a ligand for C-C chemokine receptor CCR6. Positively regulates the sperm motility and bactericidal activity in a CCR6-dependent manner. Binds to CCR6 and triggers Ca2+ mobilization in the sperm which is important for its motility. The protein is Beta-defensin 1 (Defb1) of Rattus norvegicus (Rat).